Reading from the N-terminus, the 438-residue chain is Xylose isomerase (438 aa).

The Mg(2+) site is built by D306 and D308.

Belongs to the xylose isomerase family. In terms of assembly, homotetramer. Requires Mg(2+) as cofactor.

Its subcellular location is the cytoplasm. The catalysed reaction is alpha-D-xylose = alpha-D-xylulofuranose. The polypeptide is Xylose isomerase (Caldicellulosiruptor bescii (strain ATCC BAA-1888 / DSM 6725 / KCTC 15123 / Z-1320) (Anaerocellum thermophilum)).